The chain runs to 675 residues: DNA ligase (675 aa).

NAD(+)-binding positions include 43–47 (DYEYD), 92–93 (SM), and Glu122. Lys124 (N6-AMP-lysine intermediate) is an active-site residue. Arg145, Glu179, Lys295, and Lys319 together coordinate NAD(+). The Zn(2+) site is built by Cys413, Cys416, Cys431, and Cys436. Residues 597-675 (SPDGYYKGKK…ETEAIAKFEQ (79 aa)) form the BRCT domain.

This sequence belongs to the NAD-dependent DNA ligase family. LigA subfamily. The cofactor is Mg(2+). Mn(2+) serves as cofactor.

It carries out the reaction NAD(+) + (deoxyribonucleotide)n-3'-hydroxyl + 5'-phospho-(deoxyribonucleotide)m = (deoxyribonucleotide)n+m + AMP + beta-nicotinamide D-nucleotide.. Its function is as follows. DNA ligase that catalyzes the formation of phosphodiester linkages between 5'-phosphoryl and 3'-hydroxyl groups in double-stranded DNA using NAD as a coenzyme and as the energy source for the reaction. It is essential for DNA replication and repair of damaged DNA. This Pediococcus pentosaceus (strain ATCC 25745 / CCUG 21536 / LMG 10740 / 183-1w) protein is DNA ligase.